Consider the following 541-residue polypeptide: Transcription termination factor MTERF4, chloroplastic (541 aa).

A chloroplast-targeting transit peptide spans 1 to 45; the sequence is MKIRFCNGFTKPGFLLVHFEPPSFFAVRSRSLSDSTYGNLCNHKK. Disordered stretches follow at residues 66-103 and 503-541; these read SRSL…SLYS and EVET…EEFA. Positions 85-99 are enriched in basic and acidic residues; the sequence is GRDRDRDKDKGRDSK. A compositionally biased stretch (polar residues) spans 507 to 517; sequence DPSSFDMNTLM. A compositionally biased stretch (acidic residues) spans 521–541; sequence REEESDSEYEEEEDDDDEEFA.

The protein belongs to the mTERF family.

The protein resides in the plastid. It is found in the chloroplast. The protein localises to the mitochondrion. Transcription termination factor required for processing and steady-state levels of plastid transcripts. Required for splicing of the chloroplastic Clp protease (ClpP) group IIa intron. Required for maturation of 16S rRNA and 23S rRNA in the chloroplast. Essential for embryogenesis. Required for the maintenance of the correct levels of transcripts in the mitochondria and chloroplasts. This is Transcription termination factor MTERF4, chloroplastic from Arabidopsis thaliana (Mouse-ear cress).